The sequence spans 783 residues: MKILLYIAIILSFFSLITISSECKIAVLLSGSPNDLGYNYLMNEARVKAESELKLDFSIYYENLEESMEEAEKAFQDALHKGANLIVVGSFVHVGLGLKYAALTKDQDIYWIIRGNKRPNPDLPHVVILNFNSFELHYLLGYFSGLMTKTGIVGFVAPGPDVNTISTDNSFYLGAKYARPNITFLNVYVQSWYNPNVSYSAAKMLIKNGADLIGMSQDDMSCQKAMMDSGLIGIGATGYPTHLLFGGNVGVSYITNWTNLYVKYAQHVLNDDWPDYSSYFTNLSREDSIFIDDYSYKVPIDIQNLVNDEIQRLKNTSYIPYRSDPYLAQLGIPFDSKGLLVEDQFRANKKLLKGDSISKVIDFGQYSIPIEFIDYPNSLKYGVTIVSGVCIFICLVCMTLVVVFKKARVIKSSSPAFLLLILLGCCIIFAACILFAQSPTNQTCSARIWLLSLGYTLFLGNLLVKNWRIWLLFDNPKLKKRAITNWKLYPWVFAILAIDVMILAIWQGLGNINAESRIGYDSLTQYQYKNVCSSDDQGSIALYLLLVFHGLVLLVACFISFKIKVVDIEEFNESKPITTSVYIITFCLFIVIPLMVSPQSLTSQTTIICVCAIVTTLISMLLLFGSKFYKMATQGLAINETFATSTKSSSKSSKSSYGKDNPNPNAINFGEDDTSDETSEEKHKSPKQKSVNFSNKSNSHLAVFTSDEETSKTSKLSIDFENSSKDISIDQLQQQKQQPINTNGDLENKSNDKIDDDNDNSSVLSKRISNQQNGETEIDSNNV.

Positions 1–20 are cleaved as a signal peptide; the sequence is MKILLYIAIILSFFSLITIS. The Extracellular segment spans residues 21-383; the sequence is SECKIAVLLS…DYPNSLKYGV (363 aa). Residues 56–85 are a coiled coil; that stretch reads DFSIYYENLEESMEEAEKAFQDALHKGANL. Residues Asn-181, Asn-196, Asn-256, Asn-282, and Asn-315 are each glycosylated (N-linked (GlcNAc...) asparagine). Residues 384–404 traverse the membrane as a helical segment; that stretch reads TIVSGVCIFICLVCMTLVVVF. Topologically, residues 405 to 415 are cytoplasmic; sequence KKARVIKSSSP. Residues 416–436 form a helical membrane-spanning segment; the sequence is AFLLLILLGCCIIFAACILFA. The Extracellular segment spans residues 437-443; it reads QSPTNQT. Residue Asn-441 is glycosylated (N-linked (GlcNAc...) asparagine). The helical transmembrane segment at 444–464 threads the bilayer; that stretch reads CSARIWLLSLGYTLFLGNLLV. Residues 465 to 489 lie on the Cytoplasmic side of the membrane; it reads KNWRIWLLFDNPKLKKRAITNWKLY. The chain crosses the membrane as a helical span at residues 490-510; that stretch reads PWVFAILAIDVMILAIWQGLG. Residues 511–538 are Extracellular-facing; it reads NINAESRIGYDSLTQYQYKNVCSSDDQG. Residues 539–559 form a helical membrane-spanning segment; it reads SIALYLLLVFHGLVLLVACFI. Residues 560–575 lie on the Cytoplasmic side of the membrane; it reads SFKIKVVDIEEFNESK. A helical transmembrane segment spans residues 576 to 596; that stretch reads PITTSVYIITFCLFIVIPLMV. The Extracellular portion of the chain corresponds to 597–604; the sequence is SPQSLTSQ. Residues 605 to 625 form a helical membrane-spanning segment; sequence TTIICVCAIVTTLISMLLLFG. The Cytoplasmic portion of the chain corresponds to 626-783; it reads SKFYKMATQG…GETEIDSNNV (158 aa). A compositionally biased stretch (low complexity) spans 647 to 656; it reads KSSSKSSKSS. Disordered stretches follow at residues 647 to 696 and 731 to 783; these read KSSS…FSNK and QLQQ…SNNV. A compositionally biased stretch (acidic residues) spans 670-679; sequence GEDDTSDETS. Polar residues predominate over residues 763–783; it reads VLSKRISNQQNGETEIDSNNV.

In the N-terminal section; belongs to the BMP lipoprotein family. This sequence in the C-terminal section; belongs to the G-protein coupled receptor 3 family. GABA-B receptor subfamily.

The protein localises to the cell membrane. It localises to the membrane. The protein resides in the endoplasmic reticulum membrane. It is found in the golgi apparatus membrane. Its subcellular location is the nucleus envelope. May act during the development and be a negative regulator. The polypeptide is Metabotropic glutamate receptor-like protein J (grlJ) (Dictyostelium discoideum (Social amoeba)).